The following is a 657-amino-acid chain: Hemocyanin (657 aa).

N-linked (GlcNAc...) asparagine glycosylation occurs at Asn-167. Cu cation is bound by residues His-194, His-198, His-224, His-344, His-348, and His-384. 2 cysteine pairs are disulfide-bonded: Cys-483-Cys-502 and Cys-562-Cys-609.

This sequence belongs to the tyrosinase family. Hemocyanin subfamily. It consists of at least four very similar subunits. In terms of tissue distribution, hemolymph.

Its subcellular location is the secreted. The protein resides in the extracellular space. In terms of biological role, hemocyanins are copper-containing oxygen carriers occurring freely dissolved in the hemolymph of many mollusks and arthropods. The sequence is that of Hemocyanin from Palinurus vulgaris (European spiny lobster).